The chain runs to 528 residues: MSEQSTVPEQSASDSRRAGFVLGVDVGSSMIRCHVYDRAARICGSSAQKVESLYPQPGWVEIDPDVLWLQFVAVIKESVKAAGIETNQIVGLGISTQRATFITWDKKTGKHFHNFISWQDLRATELVKSWNGSLLMKLIHSSCRVLHFFTRSKQFLAASLFTFTTQHVSLRLAWILQNLTEVQKAVEEENCCFGTVDTWLLHKLTKGSEFATDFSNASTTGLFDPYEMCWSKIVTSLLSIPLSLLPPVKDTSHNFGSVDEEIFGVPIPIVALVADQQAAMFGECCFQTGDVKLTMGTGTFLDINTGNNPQQSVGGFYPLIGWKIGQEVVCLAESNAGDTGTAIEWAQQLDLFTDAAETEKMAQSLEDSEGVYFVPSFSGLQAPLNDPCACASFMGLKPSTNKYHLVRAILESIAFRNKQLYETMQKEIHIPVRKIRADGGVCKNSFVMQMTSDLINETIDRPVHIDMSCSGAASLAGLAVGFWSDKEELKKLRQSEMVFKPQKKWQEYEVNMGNWVKAVKRSMNWYKT.

Residues Ser-28 and Ser-29 each coordinate ATP. Residues Arg-98, Asp-275, and Gln-276 each coordinate glycerol. Positions 297, 340, and 440 each coordinate ATP.

This sequence belongs to the FGGY kinase family.

The protein localises to the cytoplasm. The catalysed reaction is glycerol + ATP = sn-glycerol 3-phosphate + ADP + H(+). Its pathway is polyol metabolism; glycerol degradation via glycerol kinase pathway; sn-glycerol 3-phosphate from glycerol: step 1/1. Functionally, skin-specific kinase that plays a key role in glycerol metabolism, catalyzing its phosphorylation to produce sn-glycerol 3-phosphate. Involved in skin-specific regulation of sterol regulatory element-binding protein (SREBP) processing and lipid biosynthesis. This chain is Glycerol kinase 5 (GK5), found in Bos taurus (Bovine).